Consider the following 30-residue polypeptide: Photosystem I reaction center subunit XII (30 aa).

Residues 7 to 29 (IYTVLCIALLAGILAIRLGSTLY) traverse the membrane as a helical segment.

Belongs to the PsaM family.

It is found in the plastid. The protein resides in the chloroplast thylakoid membrane. This is Photosystem I reaction center subunit XII from Phaeodactylum tricornutum (strain CCAP 1055/1).